Consider the following 514-residue polypeptide: 6-phosphofructo-2-kinase/fructose-2,6-bisphosphatase 3 (514 aa).

A 6-phosphofructo-2-kinase region spans residues 1 to 245; that stretch reads MPLELTQSRV…VYYLMNIHVQ (245 aa). 42–50 contacts ATP; it reads GLPARGKTY. Beta-D-fructose 6-phosphate contacts are provided by Arg75 and Arg99. The active site involves Asp125. Residues Thr127 and Arg133 each coordinate beta-D-fructose 6-phosphate. Cys155 is a catalytic residue. Residue 164–169 participates in ATP binding; sequence NIMEVK. Residues Lys169, Arg190, and Tyr194 each coordinate beta-D-fructose 6-phosphate. A fructose-2,6-bisphosphatase region spans residues 246 to 514; that stretch reads PRTIYLCRHG…QPLLGQACLT (269 aa). Arg253 is a beta-D-fructose 2,6-bisphosphate binding site. Residue His254 is the Tele-phosphohistidine intermediate of the active site. Asn260 and Gly266 together coordinate beta-D-fructose 2,6-bisphosphate. Glu323 serves as the catalytic Proton donor/acceptor. Residues Tyr334, Arg348, Lys352, Tyr363, Gln389, and Arg393 each contribute to the beta-D-fructose 2,6-bisphosphate site. Residue 345–348 participates in ATP binding; that stretch reads YALR. ATP contacts are provided by residues 389–393 and Tyr425; that span reads QAVLR. A disordered region spans residues 444 to 475; it reads ERSEDAKKGPNPLMRRNSVTPLASPEPTKKPR. Phosphoserine; by AMPK and PKA is present on Ser461. Phosphothreonine is present on Thr463. At Ser467 the chain carries Phosphoserine. Thr471 bears the Phosphothreonine; by PKC mark.

The protein in the C-terminal section; belongs to the phosphoglycerate mutase family. Homodimer. Forms a heterodimer with PFKFB2. Post-translationally, phosphorylation by AMPK stimulates activity.

The catalysed reaction is beta-D-fructose 2,6-bisphosphate + H2O = beta-D-fructose 6-phosphate + phosphate. It carries out the reaction beta-D-fructose 6-phosphate + ATP = beta-D-fructose 2,6-bisphosphate + ADP + H(+). In terms of biological role, catalyzes both the synthesis and degradation of fructose 2,6-bisphosphate. The sequence is that of 6-phosphofructo-2-kinase/fructose-2,6-bisphosphatase 3 (PFKFB3) from Pongo abelii (Sumatran orangutan).